The sequence spans 214 residues: C-type lectin domain family 4 member E (214 aa).

The Cytoplasmic portion of the chain corresponds to 1-22 (MNSTKSPASHHTERGCFKNSQV). A helical; Signal-anchor for type II membrane protein membrane pass occupies residues 23 to 45 (LSWTIAGASILFLSGCFITRCVV). Over 46 to 214 (TYRSSQISGQ…CEMPEISPLD (169 aa)) the chain is Extracellular. Cys80 and Cys91 form a disulfide bridge. The C-type lectin domain maps to 87-206 (YQSSCYFFST…CFYSMPWICE (120 aa)). The N-linked (GlcNAc...) asparagine glycan is linked to Asn107. 2 disulfide bridges follow: Cys108–Cys205 and Cys179–Cys197. Residues Val117, Glu123, Glu169, Asn171, Asn193, Asp194, and Glu206 each coordinate Ca(2+). Positions 169 to 171 (EPN) match the Confers specificity for glucose/mannose-type carbohydrates motif.

In terms of assembly, monomer and homodimer. Interacts with signaling adapter Fc receptor gamma chain/FCER1G to form a functional complex; the interaction is direct. Alternatively, acts as a bridge for interaction between CLEC4D and FCER1G. A heterodimer of CLEC4E and CLEC4D associates with FCER1G to form a functional complex. Interacts with SAP130 nuclear protein that is released from necrotic cells; the interaction is direct. As to expression, highly expressed in macrophages in response to stimulation with bacterial glycolipids and pro-inflammatory cytokines. Expressed in dendritic cells (at protein level) in response to stimulation with mycobacterial trehalose 6,6'-dimycolate (TDM).

The protein localises to the cell membrane. It localises to the cell projection. The protein resides in the phagocytic cup. Calcium-dependent lectin that acts as a pattern recognition receptor (PRR) of the innate immune system: recognizes damage-associated molecular patterns (DAMPs) of abnormal self and pathogen-associated molecular patterns (PAMPs) of bacteria and fungi. The PAMPs notably include mycobacterial trehalose 6,6'-dimycolate (TDM), a cell wall glycolipid with potent adjuvant immunomodulatory functions. Interacts with signaling adapter Fc receptor gamma chain/FCER1G to form a functional complex in myeloid cells. Binding of mycobacterial trehalose 6,6'-dimycolate (TDM) to this receptor complex leads to phosphorylation of the immunoreceptor tyrosine-based activation motif (ITAM) of FCER1G, triggering activation of SYK, CARD9 and NF-kappa-B, consequently driving maturation of antigen-presenting cells and shaping antigen-specific priming of T-cells toward effector T-helper 1 (Th1) and T-helper 17 (Th17) cell subtypes. Also recognizes alpha-mannose residues on pathogenic fungi of the genus Malassezia and mediates macrophage activation. Through recognition of DAMPs released upon nonhomeostatic cell death, enables immune sensing of damaged self and promotes inflammatory cell infiltration into the damaged tissue. The sequence is that of C-type lectin domain family 4 member E from Mus musculus (Mouse).